A 192-amino-acid chain; its full sequence is MALQQIVEQTVTGLGYDLVEIERSAGGLLRVTIDLPWQPPVEGGPVVPEQFVTVEDCEKITRQLQFALEVDGADYTRLEVSSPGIDRPLRHEQDFTRFVGEVIDLTLKEPIGAAAEGQVSANRKKFRGTLERAEDGGWQIVWSDEPPVKPGQKVSKKRVPAPLQALGFTLEELREARLAPIVDFKGRSAKPV.

It belongs to the RimP family.

The protein localises to the cytoplasm. In terms of biological role, required for maturation of 30S ribosomal subunits. The sequence is that of Ribosome maturation factor RimP from Delftia acidovorans (strain DSM 14801 / SPH-1).